Here is a 127-residue protein sequence, read N- to C-terminus: Aspartate 1-decarboxylase (127 aa).

The active-site Schiff-base intermediate with substrate; via pyruvic acid is Ser25. Ser25 is subject to Pyruvic acid (Ser). Thr57 serves as a coordination point for substrate. Tyr58 acts as the Proton donor in catalysis. 73 to 75 provides a ligand contact to substrate; sequence GAA.

This sequence belongs to the PanD family. Heterooctamer of four alpha and four beta subunits. The cofactor is pyruvate. Is synthesized initially as an inactive proenzyme, which is activated by self-cleavage at a specific serine bond to produce a beta-subunit with a hydroxyl group at its C-terminus and an alpha-subunit with a pyruvoyl group at its N-terminus.

The protein localises to the cytoplasm. The enzyme catalyses L-aspartate + H(+) = beta-alanine + CO2. It participates in cofactor biosynthesis; (R)-pantothenate biosynthesis; beta-alanine from L-aspartate: step 1/1. Catalyzes the pyruvoyl-dependent decarboxylation of aspartate to produce beta-alanine. The chain is Aspartate 1-decarboxylase from Aliarcobacter butzleri (strain RM4018) (Arcobacter butzleri).